We begin with the raw amino-acid sequence, 266 residues long: uncharacterized protein (266 aa).

A helical membrane pass occupies residues 12 to 28 (ILAAGLAIGCAGGYYAY). An FAD-binding FR-type domain is found at 40-140 (EIYAPFTVNK…RGPFKTTKLD (101 aa)).

It belongs to the flavoprotein pyridine nucleotide cytochrome reductase family. FAD is required as a cofactor.

It localises to the mitochondrion outer membrane. This is an uncharacterized protein from Schizosaccharomyces pombe (strain 972 / ATCC 24843) (Fission yeast).